We begin with the raw amino-acid sequence, 322 residues long: MNGKTIILANPRGFCAGVDRAISIVERALEEFGAPVYVRHEVVHNKFVVDNLREKGAVFIEDLAEVPPGATLVYSAHGVSKAVQQEAAERGFRVFDATCPLVTKVHKEVARLDAQDCEIIMIGHKGHAEVEGTMGQLAPGKMLLVETVGDVAKLEVRNPDKLAYVSQTTLSVDETKDIIAALNARFPNIRNPHKEDICYATTNRQTAVKELAEQCDIVIVVGSPNSSNSNRLREVAASRGIDAYMVDNASYLQRTWFEGKSKVGVTAGASAPEVLVREVLATIRGWGHETVREGGGAEESIVFVLPKELRREGETKPDLCKR.

Cys-15 is a [4Fe-4S] cluster binding site. (2E)-4-hydroxy-3-methylbut-2-enyl diphosphate-binding residues include His-44 and His-77. The dimethylallyl diphosphate site is built by His-44 and His-77. His-44 and His-77 together coordinate isopentenyl diphosphate. Cys-99 is a binding site for [4Fe-4S] cluster. His-127 serves as a coordination point for (2E)-4-hydroxy-3-methylbut-2-enyl diphosphate. Residue His-127 coordinates dimethylallyl diphosphate. Residue His-127 coordinates isopentenyl diphosphate. Residue Glu-129 is the Proton donor of the active site. Thr-168 provides a ligand contact to (2E)-4-hydroxy-3-methylbut-2-enyl diphosphate. Cys-198 serves as a coordination point for [4Fe-4S] cluster. Ser-226, Ser-227, Asn-228, and Ser-270 together coordinate (2E)-4-hydroxy-3-methylbut-2-enyl diphosphate. Ser-226, Ser-227, Asn-228, and Ser-270 together coordinate dimethylallyl diphosphate. Ser-226, Ser-227, Asn-228, and Ser-270 together coordinate isopentenyl diphosphate.

Belongs to the IspH family. [4Fe-4S] cluster is required as a cofactor.

The enzyme catalyses isopentenyl diphosphate + 2 oxidized [2Fe-2S]-[ferredoxin] + H2O = (2E)-4-hydroxy-3-methylbut-2-enyl diphosphate + 2 reduced [2Fe-2S]-[ferredoxin] + 2 H(+). It catalyses the reaction dimethylallyl diphosphate + 2 oxidized [2Fe-2S]-[ferredoxin] + H2O = (2E)-4-hydroxy-3-methylbut-2-enyl diphosphate + 2 reduced [2Fe-2S]-[ferredoxin] + 2 H(+). The protein operates within isoprenoid biosynthesis; dimethylallyl diphosphate biosynthesis; dimethylallyl diphosphate from (2E)-4-hydroxy-3-methylbutenyl diphosphate: step 1/1. It participates in isoprenoid biosynthesis; isopentenyl diphosphate biosynthesis via DXP pathway; isopentenyl diphosphate from 1-deoxy-D-xylulose 5-phosphate: step 6/6. Catalyzes the conversion of 1-hydroxy-2-methyl-2-(E)-butenyl 4-diphosphate (HMBPP) into a mixture of isopentenyl diphosphate (IPP) and dimethylallyl diphosphate (DMAPP). Acts in the terminal step of the DOXP/MEP pathway for isoprenoid precursor biosynthesis. The chain is 4-hydroxy-3-methylbut-2-enyl diphosphate reductase from Neisseria gonorrhoeae (strain ATCC 700825 / FA 1090).